The following is a 121-amino-acid chain: Phosphoribosyl-AMP cyclohydrolase (121 aa).

A Mg(2+)-binding site is contributed by Asp-76. Cys-77 contributes to the Zn(2+) binding site. Asp-78 and Asp-80 together coordinate Mg(2+). Zn(2+) contacts are provided by Cys-93 and Cys-100.

The protein belongs to the PRA-CH family. Homodimer. Mg(2+) serves as cofactor. It depends on Zn(2+) as a cofactor.

It localises to the cytoplasm. The enzyme catalyses 1-(5-phospho-beta-D-ribosyl)-5'-AMP + H2O = 1-(5-phospho-beta-D-ribosyl)-5-[(5-phospho-beta-D-ribosylamino)methylideneamino]imidazole-4-carboxamide. The protein operates within amino-acid biosynthesis; L-histidine biosynthesis; L-histidine from 5-phospho-alpha-D-ribose 1-diphosphate: step 3/9. In terms of biological role, catalyzes the hydrolysis of the adenine ring of phosphoribosyl-AMP. This chain is Phosphoribosyl-AMP cyclohydrolase, found in Paracoccus denitrificans (strain Pd 1222).